The chain runs to 74 residues: Putative sulfur carrier protein NMA0882 (74 aa).

Cys13 acts as the Cysteine persulfide intermediate in catalysis.

This sequence belongs to the sulfur carrier protein TusA family.

In Neisseria meningitidis serogroup A / serotype 4A (strain DSM 15465 / Z2491), this protein is Putative sulfur carrier protein NMA0882.